Reading from the N-terminus, the 544-residue chain is ATP-dependent RNA helicase HAS1 (544 aa).

The segment covering 1-10 (MSSTKPPTTT) has biased composition (low complexity). Positions 1–59 (MSSTKPPTTTNKRKRTSNAHDEAPAKRVPEASSSKVTLDDSQPAPATSSDAVLGARSAP) are disordered. The span at 18-29 (NAHDEAPAKRVP) shows a compositional bias: basic and acidic residues. Positions 31 to 50 (ASSSKVTLDDSQPAPATSSD) are enriched in polar residues. A Q motif motif is present at residues 66 to 94 (VPFSTLNLSPPTTAAIERMGFETMTEVQA). The Helicase ATP-binding domain maps to 97 to 273 (IPPLLAGKDV…RISLRPGPLY (177 aa)). 110–117 (ARTGSGKT) is an ATP binding site. The DEAD box signature appears at 220–223 (DEAD). In terms of domain architecture, Helicase C-terminal spans 287–456 (MLEQGYVVCE…DVQKQLESLI (170 aa)). Residues 299–315 (QRFMLLFTFLKKNLKKK) carry the Bipartite nuclear localization signal motif. Positions 513 to 544 (GSVKAKKSRDEDESSDDDGQPKKAYYRNRGRK) are disordered.

Belongs to the DEAD box helicase family. DDX18/HAS1 subfamily. Associates in the nucleolus with the 60S and pre-60S ribosomal subunits.

It is found in the nucleus. It localises to the nucleolus. The catalysed reaction is ATP + H2O = ADP + phosphate + H(+). ATP-dependent RNA helicase involved in 40S ribosomal subunit biogenesis. Required for the processing and cleavage of 35S pre-rRNA at sites A0, A1, and A2, leading to mature 18S rRNA. The sequence is that of ATP-dependent RNA helicase HAS1 (HAS1) from Cryptococcus neoformans var. neoformans serotype D (strain JEC21 / ATCC MYA-565) (Filobasidiella neoformans).